Here is a 322-residue protein sequence, read N- to C-terminus: Cyclin mcs2 (322 aa).

The residue at position 310 (Ser-310) is a Phosphoserine.

The protein belongs to the cyclin family. Cyclin C subfamily. As to quaternary structure, one of the nine subunits forming the core-TFIIH basal transcription factor. Interacts with crk1 and skp1.

It is found in the nucleus. In terms of biological role, essential for progression through the cell cycle. Possesses kinase activity that can be detected when myelin basic protein (MBP) is provided as an exogenous substrate. The chain is Cyclin mcs2 (mcs2) from Schizosaccharomyces pombe (strain 972 / ATCC 24843) (Fission yeast).